We begin with the raw amino-acid sequence, 330 residues long: MNVYYEKDADLAYLQGKKIAVLGYGSQGHAHSLNLHESGLNVRVGLRPESASCAKAREAGLEVTSVAEATKWADIVMVLLPDQNQKAVYEAEIAPNLEPGNTLAFGHGFNIHYKQIVPASSVNVIMIAPKSPGHLVRRTYTEGNGVPCLIAVHQDPTGEAKQQALAWAKALGGTKAGVIETNFKNETETDLFGEQAVLCGGSAELIKAGFETLVEAGYPEELAYFECMHELKLIVDLYYEGGLSRMNYSVSDTAEYGGMTRGPRLITPAVKAEMKKILEEVQDGRFAKEFIDECNGGYQNLSKLRESNSNHAIEKVGAKLRNMMSWLIKK.

Residues 1–181 (MNVYYEKDAD…GGTKAGVIET (181 aa)) enclose the KARI N-terminal Rossmann domain. NADP(+) is bound by residues 24–27 (YGSQ), Arg47, Ser50, Ser52, and 82–85 (DQNQ). His107 is a catalytic residue. Gly133 provides a ligand contact to NADP(+). The region spanning 182–327 (NFKNETETDL…AKLRNMMSWL (146 aa)) is the KARI C-terminal knotted domain. The Mg(2+) site is built by Asp190, Glu194, Glu226, and Glu230. Ser251 is a substrate binding site.

This sequence belongs to the ketol-acid reductoisomerase family. Requires Mg(2+) as cofactor.

It catalyses the reaction (2R)-2,3-dihydroxy-3-methylbutanoate + NADP(+) = (2S)-2-acetolactate + NADPH + H(+). The enzyme catalyses (2R,3R)-2,3-dihydroxy-3-methylpentanoate + NADP(+) = (S)-2-ethyl-2-hydroxy-3-oxobutanoate + NADPH + H(+). Its pathway is amino-acid biosynthesis; L-isoleucine biosynthesis; L-isoleucine from 2-oxobutanoate: step 2/4. The protein operates within amino-acid biosynthesis; L-valine biosynthesis; L-valine from pyruvate: step 2/4. Its function is as follows. Involved in the biosynthesis of branched-chain amino acids (BCAA). Catalyzes an alkyl-migration followed by a ketol-acid reduction of (S)-2-acetolactate (S2AL) to yield (R)-2,3-dihydroxy-isovalerate. In the isomerase reaction, S2AL is rearranged via a Mg-dependent methyl migration to produce 3-hydroxy-3-methyl-2-ketobutyrate (HMKB). In the reductase reaction, this 2-ketoacid undergoes a metal-dependent reduction by NADPH to yield (R)-2,3-dihydroxy-isovalerate. This chain is Ketol-acid reductoisomerase (NADP(+)), found in Chlorobium chlorochromatii (strain CaD3).